Reading from the N-terminus, the 139-residue chain is Mitochondrial intermembrane space import and assembly protein 40 (139 aa).

3 disulfide bridges follow: Cys53-Cys55, Cys64-Cys97, and Cys74-Cys87. Residues Ser61–Tyr105 enclose the CHCH domain. 2 consecutive short sequence motifs (cx9C motif) follow at residues Cys64 to Cys74 and Cys87 to Cys97. The interval Pro102–Ser139 is disordered. Residues Glu115–Glu124 show a composition bias toward basic and acidic residues.

Monomer. Can form homooligomers.

The protein resides in the mitochondrion intermembrane space. In terms of biological role, central component of a redox-sensitive mitochondrial intermembrane space import machinery which is required for the biogenesis of respiratory chain complexes. Functions as chaperone and catalyzes the formation of disulfide bonds in substrate proteins, such as COX17 or MICU1. Required for the import and folding of small cysteine-containing proteins (small Tim) in the mitochondrial intermembrane space (IMS). Precursor proteins to be imported into the IMS are translocated in their reduced form into the mitochondria. The sequence is that of Mitochondrial intermembrane space import and assembly protein 40 (chchd4) from Xenopus tropicalis (Western clawed frog).